The sequence spans 468 residues: MSSETLYDKIWDLHRVAEIPGGSTQLFVGLHLIHEVTSPQAFSALNEKGLSVHCPERTIATVDHIVPTTSQNRPFPDSLAEQMLRTLELNCLKHSIKFFKIGSGNQGIVHVIAPETGLTQPGMTIACGDSHTSTHGAFGSIAFGIGTSQVRDVLASQTLAMKKLKVKRIWFDGYLQKGVFAKDLILHVIQKLGVKDGVGYAYEFAGPAIDGLSMEERMTICNMAIEGGARCGYINPDKTTFNYLKGRPYSPKGKEWEKAILWWESLASSKSAIYDDEVRFNASLIAPTVTWGITPGQSIAIDASIPTPESLDKNDQQIALEAYKYMDLKPGSSIEGIPIDVCFIGSCTNGRLSDLEKAAEIAKNRQVAKGVKAFVVPGSEKVAQDAESQGLDTIFEKAGFEWRKPGCSMCLAMNPDKLERNQISASSSNRNFKGRQGSAQGRTLLMSPAMVAAAAVTGSITDVRKLLH.

Cys347, Cys407, and Cys410 together coordinate [4Fe-4S] cluster.

Belongs to the aconitase/IPM isomerase family. LeuC type 1 subfamily. As to quaternary structure, heterodimer of LeuC and LeuD. [4Fe-4S] cluster serves as cofactor.

It catalyses the reaction (2R,3S)-3-isopropylmalate = (2S)-2-isopropylmalate. Its pathway is amino-acid biosynthesis; L-leucine biosynthesis; L-leucine from 3-methyl-2-oxobutanoate: step 2/4. Its function is as follows. Catalyzes the isomerization between 2-isopropylmalate and 3-isopropylmalate, via the formation of 2-isopropylmaleate. This chain is 3-isopropylmalate dehydratase large subunit, found in Prochlorococcus marinus (strain SARG / CCMP1375 / SS120).